The sequence spans 69 residues: UPF0434 protein Rmet_0534 (69 aa).

The protein belongs to the UPF0434 family.

The chain is UPF0434 protein Rmet_0534 from Cupriavidus metallidurans (strain ATCC 43123 / DSM 2839 / NBRC 102507 / CH34) (Ralstonia metallidurans).